The sequence spans 161 residues: Lipoprotein signal peptidase (161 aa).

Transmembrane regions (helical) follow at residues 6–26, 67–87, and 90–110; these read ILFL…KFYV, GLFF…YLIK, and VSDL…MGNL. Residues Asp121 and Asp139 contribute to the active site. The helical transmembrane segment at 134-154 threads the bilayer; sequence AFNIADTAISIGVLFLVVDMI.

The protein belongs to the peptidase A8 family.

It localises to the cell inner membrane. The enzyme catalyses Release of signal peptides from bacterial membrane prolipoproteins. Hydrolyzes -Xaa-Yaa-Zaa-|-(S,diacylglyceryl)Cys-, in which Xaa is hydrophobic (preferably Leu), and Yaa (Ala or Ser) and Zaa (Gly or Ala) have small, neutral side chains.. It participates in protein modification; lipoprotein biosynthesis (signal peptide cleavage). Its function is as follows. This protein specifically catalyzes the removal of signal peptides from prolipoproteins. This chain is Lipoprotein signal peptidase, found in Syntrophus aciditrophicus (strain SB).